Here is a 208-residue protein sequence, read N- to C-terminus: FMN-dependent NADH:quinone oxidoreductase 2 (208 aa).

An FMN-binding site is contributed by 17-19 (SVS).

Belongs to the azoreductase type 1 family. Homodimer. FMN is required as a cofactor.

It catalyses the reaction 2 a quinone + NADH + H(+) = 2 a 1,4-benzosemiquinone + NAD(+). The catalysed reaction is N,N-dimethyl-1,4-phenylenediamine + anthranilate + 2 NAD(+) = 2-(4-dimethylaminophenyl)diazenylbenzoate + 2 NADH + 2 H(+). Its function is as follows. Quinone reductase that provides resistance to thiol-specific stress caused by electrophilic quinones. Also exhibits azoreductase activity. Catalyzes the reductive cleavage of the azo bond in aromatic azo compounds to the corresponding amines. In Halalkalibacterium halodurans (strain ATCC BAA-125 / DSM 18197 / FERM 7344 / JCM 9153 / C-125) (Bacillus halodurans), this protein is FMN-dependent NADH:quinone oxidoreductase 2.